The sequence spans 1034 residues: Potassium-transporting ATPase alpha chain 1 (1034 aa).

The Cytoplasmic segment spans residues Met1 to Pro97. Phosphotyrosine occurs at positions 7 and 10. The interval Leu14–Lys41 is disordered. The segment covering Met26–Lys39 has biased composition (basic residues). Ser27 is subject to Phosphoserine. Residues Glu98–Ala118 form a helical membrane-spanning segment. Topologically, residues Ala119 to Tyr141 are lumenal. The chain crosses the membrane as a helical span at residues Leu142–Phe162. Residues Lys163–Ile298 are Cytoplasmic-facing. Positions Asn225–Pro239 are enriched in polar residues. Residues Asn225–Ser245 form a disordered region. The chain crosses the membrane as a helical span at residues Glu299–Val318. The Lumenal portion of the chain corresponds to Val319–Ala330. A helical transmembrane segment spans residues Met331–Ala348. The K(+) site is built by Val339, Ala340, Val342, and Glu344. Topologically, residues Thr349–Leu782 are cytoplasmic. Asp386 serves as the catalytic 4-aspartylphosphate intermediate. 2 residues coordinate Mg(2+): Asp386 and Thr388. Residues Ser462 and Ser600 each carry the phosphoserine modification. Asp727 and Asp731 together coordinate Mg(2+). A helical membrane pass occupies residues Lys783–Ile802. K(+) is bound at residue Glu796. Residues Tyr803 to Leu812 are Lumenal-facing. A helical transmembrane segment spans residues Gly813 to Ala833. Glu821 is a binding site for K(+). The Cytoplasmic segment spans residues Tyr834–Arg853. Phosphoserine is present on Ser839. Residues Leu854 to Phe876 traverse the membrane as a helical segment. Residues Thr877–Cys928 are Lumenal-facing. The chain crosses the membrane as a helical span at residues Tyr929–Lys948. Over Thr949–Asn962 the chain is Cytoplasmic. The residue at position 953 (Ser953) is a Phosphoserine; by PKA. The helical transmembrane segment at Arg963 to Tyr981 threads the bilayer. Topologically, residues Cys982–Tyr996 are lumenal. The chain crosses the membrane as a helical span at residues Gln997–Lys1017. The Cytoplasmic segment spans residues Leu1018–Tyr1034.

This sequence belongs to the cation transport ATPase (P-type) (TC 3.A.3) family. Type IIC subfamily. The gastric H(+)/K(+) ATPase pump is composed of the catalytic alpha subunit ATP4A and the regulatory beta subunit ATP4B. Interacts (via the P-domain) with ATP4B (via N-terminus); this interaction stabilizes the lumenal-open E2 conformation state and prevents the reverse reaction of the transport cycle.

It is found in the apical cell membrane. It carries out the reaction K(+)(out) + ATP + H2O + H(+)(in) = K(+)(in) + ADP + phosphate + 2 H(+)(out). The catalytic subunit of the gastric H(+)/K(+) ATPase pump which transports H(+) ions in exchange for K(+) ions across the apical membrane of parietal cells. Uses ATP as an energy source to pump H(+) ions to the gastric lumen while transporting K(+) ion from the lumen into the cell. Remarkably generates a million-fold proton gradient across the gastric parietal cell membrane, acidifying the gastric juice down to pH 1. Within a transport cycle, the transfer of a H(+) ion across the membrane is coupled to ATP hydrolysis and is associated with a transient phosphorylation that shifts the pump conformation from inward-facing (E1) to outward-facing state (E2). The release of the H(+) ion in the stomach lumen is followed by binding of K(+) ion converting the pump conformation back to the E1 state. The chain is Potassium-transporting ATPase alpha chain 1 (ATP4A) from Canis lupus familiaris (Dog).